The primary structure comprises 557 residues: Dihydroxy-acid dehydratase (557 aa).

Asp-78 is a Mg(2+) binding site. [2Fe-2S] cluster is bound at residue Cys-119. Residues Asp-120 and Lys-121 each coordinate Mg(2+). Lys-121 is subject to N6-carboxylysine. Position 192 (Cys-192) interacts with [2Fe-2S] cluster. Glu-442 serves as a coordination point for Mg(2+). The active-site Proton acceptor is the Ser-468.

It belongs to the IlvD/Edd family. As to quaternary structure, homodimer. [2Fe-2S] cluster is required as a cofactor. It depends on Mg(2+) as a cofactor.

It carries out the reaction (2R)-2,3-dihydroxy-3-methylbutanoate = 3-methyl-2-oxobutanoate + H2O. The catalysed reaction is (2R,3R)-2,3-dihydroxy-3-methylpentanoate = (S)-3-methyl-2-oxopentanoate + H2O. Its pathway is amino-acid biosynthesis; L-isoleucine biosynthesis; L-isoleucine from 2-oxobutanoate: step 3/4. It functions in the pathway amino-acid biosynthesis; L-valine biosynthesis; L-valine from pyruvate: step 3/4. Functionally, functions in the biosynthesis of branched-chain amino acids. Catalyzes the dehydration of (2R,3R)-2,3-dihydroxy-3-methylpentanoate (2,3-dihydroxy-3-methylvalerate) into 2-oxo-3-methylpentanoate (2-oxo-3-methylvalerate) and of (2R)-2,3-dihydroxy-3-methylbutanoate (2,3-dihydroxyisovalerate) into 2-oxo-3-methylbutanoate (2-oxoisovalerate), the penultimate precursor to L-isoleucine and L-valine, respectively. This is Dihydroxy-acid dehydratase from Bacillus cereus (strain ATCC 10987 / NRS 248).